The primary structure comprises 291 residues: Beta-lactamase CTX-M-8 (291 aa).

Positions 1–30 are cleaved as a signal peptide; the sequence is MMRHRVKRMMLMTTACISLLLGSAPLYAQA. Catalysis depends on serine 73, which acts as the Nucleophile; acyl-ester intermediate. 4 residues coordinate a beta-lactam: lysine 76, serine 133, glutamate 169, and serine 240.

It belongs to the class-A beta-lactamase family. As to quaternary structure, monomer.

It is found in the secreted. It carries out the reaction a beta-lactam + H2O = a substituted beta-amino acid. With respect to regulation, inhibited by the beta-lactamase-blocking agents clavulanic acid, tazobactam and sulbactam; in the DH5alpha strain of E.coli. In terms of biological role, extended-spectrum beta-lactamase (ESBL) which confers resistance to penicillins, as well as first, third and fourth-generation cephalosporins. Has cefotaxime-hydrolyzing activity. Inactive against cephalosporin antibiotic, cefoxitin, and the carbapenem, imipenem. This chain is Beta-lactamase CTX-M-8, found in Citrobacter amalonaticus.